Here is a 643-residue protein sequence, read N- to C-terminus: Probable potassium transport system protein Kup (643 aa).

The segment covering 1–12 (MSISSKTEDSDI) has biased composition (basic and acidic residues). The disordered stretch occupies residues 1–20 (MSISSKTEDSDIRSSVMTDH). 12 helical membrane passes run 28–48 (LAGL…TSPL), 65–85 (AGNV…IVGL), 121–141 (WLLV…GMIT), 158–178 (PAFH…LFLF), 187–207 (GALF…LGII), 224–244 (GISF…AVFL), 268–288 (WFLL…ALLL), 301–321 (LVPS…TIIA), 358–378 (IYVP…VAWF), 384–404 (LAAA…ILFY), 415–435 (PAAL…FFGA), and 440–460 (LFHG…IMNT).

It belongs to the HAK/KUP transporter (TC 2.A.72) family.

It localises to the cell inner membrane. The enzyme catalyses K(+)(in) + H(+)(in) = K(+)(out) + H(+)(out). In terms of biological role, transport of potassium into the cell. Likely operates as a K(+):H(+) symporter. The sequence is that of Probable potassium transport system protein Kup from Chlorobium luteolum (strain DSM 273 / BCRC 81028 / 2530) (Pelodictyon luteolum).